The sequence spans 202 residues: Small ribosomal subunit protein uS4 (202 aa).

The S4 RNA-binding domain maps to 90-152; sequence MRLDNTVFRL…ERSRRLVETN (63 aa).

This sequence belongs to the universal ribosomal protein uS4 family. Part of the 30S ribosomal subunit. Contacts protein S5. The interaction surface between S4 and S5 is involved in control of translational fidelity.

Its function is as follows. One of the primary rRNA binding proteins, it binds directly to 16S rRNA where it nucleates assembly of the body of the 30S subunit. With S5 and S12 plays an important role in translational accuracy. The chain is Small ribosomal subunit protein uS4 from Thermosynechococcus vestitus (strain NIES-2133 / IAM M-273 / BP-1).